Consider the following 197-residue polypeptide: Putative WUSCHEL-related homeobox 10 (197 aa).

Residues 75-139 (STRPRWTPTT…NRRARSKRKQ (65 aa)) constitute a DNA-binding region (homeobox; WUS-type). A disordered region spans residues 132–168 (RARSKRKQPPTTTITSSQADDAAVTTTEERGRCGDDS). Residues 140–150 (PPTTTITSSQA) are compositionally biased toward polar residues.

This sequence belongs to the WUS homeobox family.

The protein resides in the nucleus. Potential transcription factor that plays a central role during developmental processes. The protein is Putative WUSCHEL-related homeobox 10 (WOX10) of Arabidopsis thaliana (Mouse-ear cress).